The chain runs to 179 residues: Large ribosomal subunit protein uL5 (179 aa).

The protein belongs to the universal ribosomal protein uL5 family. Part of the 50S ribosomal subunit; part of the 5S rRNA/L5/L18/L25 subcomplex. Contacts the 5S rRNA and the P site tRNA. Forms a bridge to the 30S subunit in the 70S ribosome.

Its function is as follows. This is one of the proteins that bind and probably mediate the attachment of the 5S RNA into the large ribosomal subunit, where it forms part of the central protuberance. In the 70S ribosome it contacts protein S13 of the 30S subunit (bridge B1b), connecting the 2 subunits; this bridge is implicated in subunit movement. Contacts the P site tRNA; the 5S rRNA and some of its associated proteins might help stabilize positioning of ribosome-bound tRNAs. The sequence is that of Large ribosomal subunit protein uL5 from Pseudomonas syringae pv. tomato (strain ATCC BAA-871 / DC3000).